Here is a 361-residue protein sequence, read N- to C-terminus: Caffeic acid 3-O-methyltransferase 1 (361 aa).

A substrate-binding site is contributed by Met128–Leu134. Positions Ala160–Met178 are substrate binding. S-adenosyl-L-methionine contacts are provided by Gly206, Asp229, Asp249, Met250, and Lys263. His267 functions as the Proton acceptor in the catalytic mechanism.

Belongs to the class I-like SAM-binding methyltransferase superfamily. Cation-independent O-methyltransferase family. COMT subfamily. In terms of assembly, homodimer.

The enzyme catalyses (E)-caffeate + S-adenosyl-L-methionine = (E)-ferulate + S-adenosyl-L-homocysteine + H(+). It participates in aromatic compound metabolism; phenylpropanoid biosynthesis. Functionally, catalyzes the conversion of caffeic acid to ferulic acid and of 5-hydroxyferulic acid to sinapic acid. The resulting products may subsequently be converted to the corresponding alcohols that are incorporated into lignins. This is Caffeic acid 3-O-methyltransferase 1 (COMT1) from Ocimum basilicum (Sweet basil).